The primary structure comprises 145 residues: Putative pre-16S rRNA nuclease (145 aa).

It belongs to the YqgF nuclease family.

The protein localises to the cytoplasm. Its function is as follows. Could be a nuclease involved in processing of the 5'-end of pre-16S rRNA. The protein is Putative pre-16S rRNA nuclease of Microcystis aeruginosa (strain NIES-843 / IAM M-2473).